The primary structure comprises 544 residues: Homeobox protein B-H1 (544 aa).

Residues 53 to 70 (STTTMSSGGSTTTASGIG) are compositionally biased toward low complexity. 4 disordered regions span residues 53–73 (STTT…GKPN), 92–179 (YKQQ…PPTA), 236–308 (GGVG…AFTD), and 471–544 (AANP…QIQV). Residues 95–105 (QQHHQQLHHHN) are compositionally biased toward basic residues. Residues 106 to 131 (NNNNSGSSGGSSPAHSNNNNNINGDN) are compositionally biased toward low complexity. Residues 156 to 172 (THPHTHPHALMHPHGKL) are compositionally biased toward basic residues. The span at 247–262 (DLDDSSDYHEENEDCD) shows a compositional bias: acidic residues. Positions 266–282 (MDDHSVCSNGGKDDDGN) are enriched in basic and acidic residues. The span at 283–293 (SVKSGSTSDMS) shows a compositional bias: polar residues. A DNA-binding region (homeobox) is located at residues 299–358 (QRKARTAFTDHQLQTLEKSFERQKYLSVQERQELAHKLDLSDCQVKTWYQNRRTKWKRQT). Residues 476 to 485 (GPHPVAPPPS) are compositionally biased toward pro residues. Over residues 492-506 (PSGLVKPIPAHSASA) the composition is skewed to low complexity. Residues 507–516 (SPPPRPPSTP) are compositionally biased toward pro residues.

Belongs to the Antp homeobox family. In terms of tissue distribution, B-H1 and B-H2 are abundant in the eye-antenna imaginal disk. Expressed in R1 and R6 cells throughout larval stage until 30 hours after puparium formation, at which time expression is seen in the anterior and posterior primary pigment cells. Coexpressed in embryonic glial cells, neurons of the CNS and PNS, most latitudinal anterior cells of the developing notum and the central circular region of the leg and antennal imaginal disk throughout larval development.

It localises to the nucleus. Its function is as follows. B-H1 and B-H2 are regulated by members of the wg signaling pathway; wg and dpp. B-H1 and B-H2 are coexpressed and functionally required in R1 and R6 receptor cells and primary pigment cells for normal eye development. Coexpression is also required for the fate determination of external sensory organs, formation of notal microchaetae, formation of presutural macrochaetae, antennal development and for distal leg morphogenesis; segmentation and specification of tarsal segments 3-5. The sequence is that of Homeobox protein B-H1 (B-H1) from Drosophila melanogaster (Fruit fly).